Consider the following 309-residue polypeptide: Major capsid protein (309 aa).

Positions 64–83 (PNEVEFSATDETSSTEDHGL) are disordered.

Multimerizes.

It is found in the virion. Probably the major capsid protein. The chain is Major capsid protein from Pseudomonas phage JBD67.